The following is a 160-amino-acid chain: MYNTIMAGNTSIVCNNELVWETEIITNIILLKQEKISLESHKKKLDEQRRFGNTGHLILVTRLTDETINIIKAAEDEYYLLRGAISVEGVDSAFLRQPGVRASLNQLMDTLSLINDHLAITQQSSLPSDELKATVREIAVITENVKRIIILLSLLIMNIK.

This is an uncharacterized protein from Magallana gigas (Pacific oyster).